The chain runs to 387 residues: MGMDIHLQAGELAGWLNDAALPLWRQKGFDGEGGGFVETIDMKGEPTRDDRRSRVQPRQVYCFAAAGRRGWDGDWRTAAEGGLLYFDRVYGQPGGFYGALANADGKLIDASFDLYNQAFALLAFAHLAEVLPERGAEMVGRSDKLRRQLEARCKHPLAGFEEDDPPRLPLGSNPHMHLFEACLASEEVEGFDRVAWANLADEIAHLAMDRFIDAESGALREFFDHDWAPFPGEKGRIVEPGHLFEWAWLLLRWAERRGNAQAIVKARRLFEIGEKDGTCPDRDVVVMTLFDDFSVADPTARLWPQTEWLKAAIRFAALTEGAERERYLASAGRAAAALQRFLNVPVRGLWRDKQKADGSFVEEPAPASTFYHILCAIYELEDCLKRM.

The protein belongs to the N-acylglucosamine 2-epimerase family.

It carries out the reaction D-mannose 6-phosphate = D-fructose 6-phosphate. The chain is Mannose-6-phosphate isomerase (pmi) from Rhizobium meliloti (strain 1021) (Ensifer meliloti).